Consider the following 265-residue polypeptide: Glutamate racemase (265 aa).

Substrate is bound by residues 10 to 11 and 42 to 43; these read DS and YG. Residue cysteine 73 is the Proton donor/acceptor of the active site. Substrate is bound at residue 74 to 75; the sequence is NT. Cysteine 183 serves as the catalytic Proton donor/acceptor. 184–185 contacts substrate; it reads TH.

The protein belongs to the aspartate/glutamate racemases family.

It catalyses the reaction L-glutamate = D-glutamate. It functions in the pathway cell wall biogenesis; peptidoglycan biosynthesis. Its function is as follows. Provides the (R)-glutamate required for cell wall biosynthesis. The chain is Glutamate racemase from Corynebacterium diphtheriae (strain ATCC 700971 / NCTC 13129 / Biotype gravis).